Here is a 419-residue protein sequence, read N- to C-terminus: Tol-Pal system protein TolB (419 aa).

The first 19 residues, 1–19 (MFNRIISLFLLLFTGQVIA), serve as a signal peptide directing secretion.

Belongs to the TolB family. In terms of assembly, the Tol-Pal system is composed of five core proteins: the inner membrane proteins TolA, TolQ and TolR, the periplasmic protein TolB and the outer membrane protein Pal. They form a network linking the inner and outer membranes and the peptidoglycan layer.

Its subcellular location is the periplasm. Functionally, part of the Tol-Pal system, which plays a role in outer membrane invagination during cell division and is important for maintaining outer membrane integrity. The protein is Tol-Pal system protein TolB of Legionella pneumophila (strain Corby).